The following is a 451-amino-acid chain: uncharacterized protein (451 aa).

Transmembrane regions (helical) follow at residues 11–31 (VLLKLIQILFFTISISIYIDL), 56–76 (IQIYYWFVGIILFSIAWSIGT), 151–171 (IIGIQSCLIIFFSTLGFNIYL), 175–195 (FWLIKTIIVDWIISAILLIIF), and 207–227 (VYSVISYIFGSNVLGFGTIKI). Residues 250 to 300 (TKSNNNNNNNNNNKQDDNIIYDTDSSFNGQSSSSSSSSSSSSSSSSSATTT) are disordered. Composition is skewed to low complexity over residues 253 to 262 (NNNNNNNNNN) and 280 to 300 (SSSSSSSSSSSSSSSSSATTT). 2 consecutive transmembrane segments (helical) span residues 392-412 (FVGVIILWVYTISNFIISDYS) and 413-433 (LLTIPNILVVVGFSGTILTYL).

The protein resides in the membrane. This is an uncharacterized protein from Dictyostelium discoideum (Social amoeba).